The following is a 141-amino-acid chain: Arsenate reductase (141 aa).

Residue C12 is the Nucleophile; cysteine thioarsenate intermediate of the active site.

The protein belongs to the ArsC family. In terms of assembly, monomer in solution.

It carries out the reaction [glutaredoxin]-dithiol + arsenate + glutathione + H(+) = glutathionyl-S-S-[glutaredoxin] + arsenite + H2O. Inhibited by the thiol reagents iodoacetate (IAA) and N-ethylmaleimide (NEM). Activity is rapidly inactivated by the histidine-modifying reagent diethylpyrocarbonate (DEPC). Functionally, involved in resistance to arsenate. Catalyzes the reduction of arsenate [As(V)] to arsenite [As(III)]. The resulting arsenite is then extruded from the cell via the ArsAB transport system. This chain is Arsenate reductase, found in Escherichia coli.